We begin with the raw amino-acid sequence, 77 residues long: Acyl carrier protein (77 aa).

Positions 1–76 (MENFDKVKDI…DAVKFINSIE (76 aa)) constitute a Carrier domain. An O-(pantetheine 4'-phosphoryl)serine modification is found at Ser-36.

It belongs to the acyl carrier protein (ACP) family. 4'-phosphopantetheine is transferred from CoA to a specific serine of apo-ACP by AcpS. This modification is essential for activity because fatty acids are bound in thioester linkage to the sulfhydryl of the prosthetic group.

The protein localises to the cytoplasm. Its pathway is lipid metabolism; fatty acid biosynthesis. Functionally, carrier of the growing fatty acid chain in fatty acid biosynthesis. The protein is Acyl carrier protein of Staphylococcus saprophyticus subsp. saprophyticus (strain ATCC 15305 / DSM 20229 / NCIMB 8711 / NCTC 7292 / S-41).